The chain runs to 215 residues: MRMTRAASALAGLGLAVAAALGSVAPASAAAETSTPRSVAAYEASTENAAATRAFQEAVMKAVAEKRAANPGALAVTVTYDASAAPTFRSQIASSTSIWNGAVSNVRLQEGSNADFTYREGNDPRGSYASTEAHGRGYIFLDYAQNQQYNSTRVTTHETGHVLGLPDTYSGPCSQLMSGGGPGPSCTNAQPDSAERSRVEQLWANGLAEAAAEVR.

The N-terminal stretch at 1-30 (MRMTRAASALAGLGLAVAAALGSVAPASAA) is a signal peptide. Residue Thr152 participates in Ca(2+) binding. His157 lines the Zn(2+) pocket. Glu158 is an active-site residue. Zn(2+)-binding residues include His161 and Asp167. Residues Cys173 and Cys186 are joined by a disulfide bond.

The protein belongs to the peptidase M7 family. The cofactor is Zn(2+).

It is found in the secreted. The catalysed reaction is Hydrolyzes proteins with a preference for Tyr or Phe in the P1' position. Has no action on amino-acid p-nitroanilides.. The chain is Extracellular small neutral protease (snpA) from Streptomyces coelicolor.